We begin with the raw amino-acid sequence, 391 residues long: Multidrug resistance protein MdtL (391 aa).

The next 12 helical transmembrane spans lie at 4 to 24 (FLIC…MYLV), 42 to 62 (IAFS…GKVA), 69 to 89 (PVAI…SLAE), 93 to 113 (LFLA…VVAF), 131 to 151 (LLNG…HLIM), 158 to 178 (SLFW…LFIL), 203 to 222 (FFLS…LTFV), 245 to 265 (ALTA…LGIF), 269 to 289 (TLMI…AVSP), 293 to 313 (VSLF…GVAM), 331 to 351 (LGIA…VVGI), and 356 to 376 (MLIG…MFVA).

This sequence belongs to the major facilitator superfamily. DHA1 family. MdtL (TC 2.A.1.2.22) subfamily.

It localises to the cell inner membrane. Confers resistance to chloramphenicol. The chain is Multidrug resistance protein MdtL from Escherichia coli O139:H28 (strain E24377A / ETEC).